The primary structure comprises 454 residues: Rhizobactin siderophore biosynthesis protein RhbE (454 aa).

Residue 7-13 participates in FAD binding; sequence AGIGIGP.

This sequence belongs to the lysine N(6)-hydroxylase/L-ornithine N(5)-oxygenase family. FAD is required as a cofactor.

The protein operates within siderophore biosynthesis; rhizobactin biosynthesis. This Rhizobium meliloti (strain 1021) (Ensifer meliloti) protein is Rhizobactin siderophore biosynthesis protein RhbE (rhbE).